The following is a 908-amino-acid chain: Translation initiation factor IF-2 (908 aa).

Disordered stretches follow at residues P122–A180 and E203–K267. Residues V132–E143 are compositionally biased toward acidic residues. Positions E157–V166 are enriched in low complexity. The segment covering A223 to E248 has biased composition (basic and acidic residues). Positions K256–K267 are enriched in basic residues. The 170-residue stretch at P409 to S578 folds into the tr-type G domain. The G1 stretch occupies residues G418–T425. Position 418–425 (G418–T425) interacts with GTP. A G2 region spans residues G443–H447. The interval D464–G467 is G3. GTP is bound by residues D464–H468 and N518–D521. The segment at N518–D521 is G4. The tract at residues S554 to H556 is G5.

The protein belongs to the TRAFAC class translation factor GTPase superfamily. Classic translation factor GTPase family. IF-2 subfamily.

It localises to the cytoplasm. One of the essential components for the initiation of protein synthesis. Protects formylmethionyl-tRNA from spontaneous hydrolysis and promotes its binding to the 30S ribosomal subunits. Also involved in the hydrolysis of GTP during the formation of the 70S ribosomal complex. In Saccharophagus degradans (strain 2-40 / ATCC 43961 / DSM 17024), this protein is Translation initiation factor IF-2.